The chain runs to 77 residues: Metallothionein-like protein type 2 (77 aa).

This sequence belongs to the metallothionein superfamily. Type 15 family. In terms of tissue distribution, expressed in the left, stem and flower, at very low levels in roots and is not detectable in mesophyll protoplasts.

Functionally, metallothioneins have a high content of cysteine residues that bind various heavy metals. The protein is Metallothionein-like protein type 2 (MTI) of Vicia faba (Broad bean).